The chain runs to 169 residues: S-ribosylhomocysteine lyase (169 aa).

Fe cation is bound by residues His-54, His-58, and Cys-128.

This sequence belongs to the LuxS family. As to quaternary structure, homodimer. The cofactor is Fe cation.

It catalyses the reaction S-(5-deoxy-D-ribos-5-yl)-L-homocysteine = (S)-4,5-dihydroxypentane-2,3-dione + L-homocysteine. Functionally, involved in the synthesis of autoinducer 2 (AI-2) which is secreted by bacteria and is used to communicate both the cell density and the metabolic potential of the environment. The regulation of gene expression in response to changes in cell density is called quorum sensing. Catalyzes the transformation of S-ribosylhomocysteine (RHC) to homocysteine (HC) and 4,5-dihydroxy-2,3-pentadione (DPD). This Shewanella sp. (strain MR-7) protein is S-ribosylhomocysteine lyase.